A 541-amino-acid chain; its full sequence is Protein yellow (541 aa).

An N-terminal signal peptide occupies residues 1–21 (MFQDKGWILVTLITLVTPSWA). N-linked (GlcNAc...) asparagine glycosylation is found at asparagine 144 and asparagine 215. The interval 443–463 (QKPQTSWASSPPPPSRTYLPA) is disordered.

The protein belongs to the major royal jelly protein family.

The protein resides in the secreted. Controls the pigmentation pattern of the adult cuticle and larval mouth parts. The sequence is that of Protein yellow (y) from Drosophila melanogaster (Fruit fly).